A 357-amino-acid polypeptide reads, in one-letter code: 5-hydroxytryptamine receptor 5A (357 aa).

The Extracellular portion of the chain corresponds to 1-36 (MDLPINLTSFSLSTPSTLEPNRSLDTEALRTSQSFL). N-linked (GlcNAc...) asparagine glycans are attached at residues Asn6 and Asn21. A helical transmembrane segment spans residues 37 to 63 (SAFRVLVLTLLGFLAAATFTWNLLVLA). Residues 64 to 76 (TILRVRTFHRVPH) lie on the Cytoplasmic side of the membrane. The helical transmembrane segment at 77–103 (NLVASMAISDVLVAVLVMPLSLVHELS) threads the bilayer. Residues 104–114 (GRRWQLGRRLC) are Extracellular-facing. A disulfide bridge links Cys114 with Cys192. Residues 115–137 (QLWIACDVLCCTASIWNVTAIAL) traverse the membrane as a helical segment. Serotonin is bound at residue Asp121. Topologically, residues 138-155 (DRYWSITRHLEYTLRARK) are cytoplasmic. A helical transmembrane segment spans residues 156-176 (RVSNVMILLTWALSAVISLAP). The Extracellular portion of the chain corresponds to 177–198 (LLFGWGETYSELSEECQVSREP). The helical transmembrane segment at 199–220 (SYTVFSTVGAFYLPLCVVLFVY) threads the bilayer. Topologically, residues 221-287 (WKIYKAAKFR…QKEQRAALMV (67 aa)) are cytoplasmic. A helical membrane pass occupies residues 288 to 312 (GILIGVFVLCWFPFFVTELISPLCS). Over 313–314 (WD) the chain is Extracellular. The helical transmembrane segment at 315 to 339 (IPALWKSIFLWLGYSNSFFNPLIYT) threads the bilayer. Residues 340–357 (AFNRSYSSAFKVFFSKQQ) lie on the Cytoplasmic side of the membrane.

It belongs to the G-protein coupled receptor 1 family. Central nervous system.

The protein localises to the cell membrane. Its function is as follows. G-protein coupled receptor for 5-hydroxytryptamine (serotonin), a biogenic hormone that functions as a neurotransmitter, a hormone and a mitogen. Also functions as a receptor for ergot alkaloid derivatives and other psychoactive substances. Ligand binding causes a conformation change that triggers signaling via guanine nucleotide-binding proteins (G proteins) and modulates the activity of downstream effectors. Htr5a is coupled to G(i)/G(o) G alpha proteins and mediates inhibitory neurotransmission: signaling inhibits adenylate cyclase activity and activates a phosphatidylinositol-calcium second messenger system that regulates the release of Ca(2+) ions from intracellular stores. The polypeptide is 5-hydroxytryptamine receptor 5A (Rattus norvegicus (Rat)).